The chain runs to 57 residues: Alpha-conotoxin-like Sm1.2 (57 aa).

The N-terminal stretch at 1 to 16 is a signal peptide; it reads MFTVFLLVVLATTVVS. Positions 17-42 are excised as a propeptide; that stretch reads FPSDRESDGANDEARTDEPEEHGPDR. The interval 17 to 46 is disordered; the sequence is FPSDRESDGANDEARTDEPEEHGPDRNGCC. Over residues 19-41 the composition is skewed to basic and acidic residues; sequence SDRESDGANDEARTDEPEEHGPD. 2 cysteine pairs are disulfide-bonded: cysteine 45–cysteine 51 and cysteine 46–cysteine 56. At cysteine 56 the chain carries Cysteine amide.

This sequence belongs to the conotoxin A superfamily. Expressed by the venom duct.

The protein resides in the secreted. Alpha-conotoxins act on postsynaptic membranes, they bind to the nicotinic acetylcholine receptors (nAChR) and thus inhibit them. This chain is Alpha-conotoxin-like Sm1.2, found in Conus stercusmuscarum (Fly-specked cone).